The chain runs to 92 residues: Protease inhibitors (92 aa).

The signal sequence occupies residues 1–19 (MKFALALCAAVLLVVLVQA). Pacifastin domains follow at residues 20–54 (EEKC…CQPA) and 57–92 (EISC…CPNQ). 6 disulfide bridges follow: Cys23–Cys38, Cys33–Cys51, Cys36–Cys46, Cys60–Cys75, Cys70–Cys89, and Cys73–Cys84. O-linked (Fuc) threonine glycosylation occurs at Thr65.

Belongs to the protease inhibitor I19 family. As to expression, brain and fat body.

The protein resides in the secreted. Functionally, both LCMI I and II are inhibitors of chymotrypsin and elastase (in vitro). They both inhibit the prophenol oxidase activation cascade. This Locusta migratoria (Migratory locust) protein is Protease inhibitors.